A 152-amino-acid chain; its full sequence is uncharacterized protein (152 aa).

Residues 7–27 (TLSVIVFLISLIIIFGIYFSS) form a helical membrane-spanning segment.

It localises to the membrane. This is an uncharacterized protein from Methanocaldococcus jannaschii (strain ATCC 43067 / DSM 2661 / JAL-1 / JCM 10045 / NBRC 100440) (Methanococcus jannaschii).